A 132-amino-acid chain; its full sequence is Interleukin-5 (132 aa).

The N-terminal stretch at 1 to 17 (MRLPLQLSILTLAWVWA) is a signal peptide. Asparagine 45, asparagine 74, and asparagine 88 each carry an N-linked (GlcNAc...) asparagine glycan.

Belongs to the IL-5 family. As to quaternary structure, homodimer; disulfide-linked. Interacts with IL5RA. Interacts with CSF2RB.

Its subcellular location is the secreted. Its function is as follows. Homodimeric cytokine expressed predominantly by T-lymphocytes and NK cells that plays an important role in the survival, differentiation, and chemotaxis of eosinophils. Also acts on activated and resting B-cells to induce immunoglobulin production, growth, and differentiation. Mechanistically, exerts its biological effects through a receptor composed of IL5RA subunit and the cytokine receptor common subunit beta/CSF2RB. Binding to the receptor leads to activation of various kinases including LYN, SYK and JAK2 and thereby propagates signals through the RAS-MAPK and JAK-STAT5 pathways respectively. The polypeptide is Interleukin-5 (IL5) (Meriones unguiculatus (Mongolian jird)).